Reading from the N-terminus, the 170-residue chain is Acireductone dioxygenase (170 aa).

Residues His99, His101, Glu105, and His144 each contribute to the Fe(2+) site. Residues His99, His101, Glu105, and His144 each coordinate Ni(2+).

The protein belongs to the acireductone dioxygenase (ARD) family. Monomer. Fe(2+) is required as a cofactor. Requires Ni(2+) as cofactor.

It catalyses the reaction 1,2-dihydroxy-5-(methylsulfanyl)pent-1-en-3-one + O2 = 3-(methylsulfanyl)propanoate + CO + formate + 2 H(+). The enzyme catalyses 1,2-dihydroxy-5-(methylsulfanyl)pent-1-en-3-one + O2 = 4-methylsulfanyl-2-oxobutanoate + formate + 2 H(+). It participates in amino-acid biosynthesis; L-methionine biosynthesis via salvage pathway; L-methionine from S-methyl-5-thio-alpha-D-ribose 1-phosphate: step 5/6. Its function is as follows. Catalyzes 2 different reactions between oxygen and the acireductone 1,2-dihydroxy-3-keto-5-methylthiopentene (DHK-MTPene) depending upon the metal bound in the active site. Fe-containing acireductone dioxygenase (Fe-ARD) produces formate and 2-keto-4-methylthiobutyrate (KMTB), the alpha-ketoacid precursor of methionine in the methionine recycle pathway. Ni-containing acireductone dioxygenase (Ni-ARD) produces methylthiopropionate, carbon monoxide and formate, and does not lie on the methionine recycle pathway. The protein is Acireductone dioxygenase of Bacillus cereus (strain ATCC 14579 / DSM 31 / CCUG 7414 / JCM 2152 / NBRC 15305 / NCIMB 9373 / NCTC 2599 / NRRL B-3711).